A 317-amino-acid polypeptide reads, in one-letter code: Ribosomal protein L11 methyltransferase (317 aa).

The S-adenosyl-L-methionine site is built by T158, G179, D201, and N244.

The protein belongs to the methyltransferase superfamily. PrmA family.

The protein resides in the cytoplasm. The catalysed reaction is L-lysyl-[protein] + 3 S-adenosyl-L-methionine = N(6),N(6),N(6)-trimethyl-L-lysyl-[protein] + 3 S-adenosyl-L-homocysteine + 3 H(+). In terms of biological role, methylates ribosomal protein L11. This is Ribosomal protein L11 methyltransferase from Streptococcus pyogenes serotype M5 (strain Manfredo).